A 761-amino-acid chain; its full sequence is Translational repressor ifet-1 (761 aa).

Disordered stretches follow at residues Ser101–Gly274, Lys386–His446, Val557–Gln592, Gln681–Gln702, and Gly730–Lys761. 3 stretches are compositionally biased toward basic and acidic residues: residues Pro114 to Gly128, Arg164 to Leu189, and Ile212 to Lys222. Composition is skewed to polar residues over residues Gln400–Gln410, Val557–Ala568, Ser576–Gln592, and Glu690–Gln702.

In terms of assembly, interacts with cgh-1. Interacts with ife-1 and oma-1. In terms of tissue distribution, in the embryo, significantly enriched in the germ cell lineage.

It localises to the cytoplasm. Involved in translational repression of multiple mRNAs in the distal gonad. Recruited to the 3' untranslated region (UTR) of zif-1 by oma-1 and is required for translational repression of zif-1. May also be involved in translational repression of mei-1 through recruitment to the mei-1 3' UTR by oma-1. Required for oogenesis but not spermatogenesis, for P granule formation and for the localization of car-1 and cgh-1 to P granules. Required for normal spindle orientation in early embryos. This is Translational repressor ifet-1 from Caenorhabditis elegans.